The chain runs to 601 residues: Proline--tRNA ligase (601 aa).

Belongs to the class-II aminoacyl-tRNA synthetase family. ProS type 1 subfamily. In terms of assembly, homodimer.

Its subcellular location is the cytoplasm. It catalyses the reaction tRNA(Pro) + L-proline + ATP = L-prolyl-tRNA(Pro) + AMP + diphosphate. In terms of biological role, catalyzes the attachment of proline to tRNA(Pro) in a two-step reaction: proline is first activated by ATP to form Pro-AMP and then transferred to the acceptor end of tRNA(Pro). As ProRS can inadvertently accommodate and process non-cognate amino acids such as alanine and cysteine, to avoid such errors it has two additional distinct editing activities against alanine. One activity is designated as 'pretransfer' editing and involves the tRNA(Pro)-independent hydrolysis of activated Ala-AMP. The other activity is designated 'posttransfer' editing and involves deacylation of mischarged Ala-tRNA(Pro). The misacylated Cys-tRNA(Pro) is not edited by ProRS. This chain is Proline--tRNA ligase, found in Trichodesmium erythraeum (strain IMS101).